The chain runs to 301 residues: MGESAESGSRQLPAMSPPRRSVAYRRKIVDALWWAACVCCLAVVITPTLWMLIGVVSRAVPVFHWSVLVQDSQGNGGGLRNAIIGTAVLAIGVILVGGTVSVLTGIYLSEFATGKTRSILRGAYEVLSGIPSIVLGYVGYLALVVYFDWGFSLAAGVLVLSVMSIPYIAKATESALAQVPTSYREAAEALGLPAGWALRKIVLKTAMPGIVTGMLVALALAIGETAPLLYTAGWSNSPPTGQLTDSPVGYLTYPIWTFYNQPSKSAQDLSYDAALLLIVFLLLLIFIGRLINWLSRRRWDV.

6 consecutive transmembrane segments (helical) span residues 36 to 56 (ACVC…IGVV), 83 to 103 (IIGT…VSVL), 127 to 147 (LSGI…VVYF), 149 to 169 (WGFS…PYIA), 209 to 229 (GIVT…APLL), and 274 to 294 (ALLL…INWL). An ABC transmembrane type-1 domain is found at 83–288 (IIGTAVLAIG…VFLLLLIFIG (206 aa)).

The protein belongs to the binding-protein-dependent transport system permease family. CysTW subfamily.

It is found in the cell membrane. In terms of biological role, part of the binding-protein-dependent transport system for phosphate; probably responsible for the translocation of the substrate across the membrane. The chain is Phosphate transport system permease protein PstA 2 (pstA2) from Mycobacterium bovis (strain ATCC BAA-935 / AF2122/97).